A 1246-amino-acid polypeptide reads, in one-letter code: Zinc finger protein 687a (1246 aa).

The span at 24–47 shows a compositional bias: basic and acidic residues; sequence KEAIQSDTHGNHNEHSSVVGKERS. The segment at 24–387 is disordered; it reads KEAIQSDTHG…PTLVESASDA (364 aa). Polar residues-rich tracts occupy residues 88–111 and 163–195; these read GEFS…SSVP and AFTN…FSSK. The span at 287–301 shows a compositional bias: low complexity; the sequence is SSTNPTSLTSTNNLP. Basic and acidic residues predominate over residues 302 to 317; sequence VEEKDLEHIIEERDSP. The span at 326–338 shows a compositional bias: polar residues; the sequence is QSRTSLPSNSQGA. Basic and acidic residues-rich tracts occupy residues 341–350 and 360–375; these read SKQRITREEA and MQEK…EGKS. The segment at 587-619 adopts a C2H2-type 1 zinc-finger fold; it reads YRCLECGDAFALERSLARHYDRRSMRIEVTCNH. A C2H2-type 2; degenerate zinc finger spans residues 696–719; that stretch reads HSCPECWSTFKGKQELVAHFQEVE. 3 C2H2-type zinc fingers span residues 817 to 840, 854 to 876, and 885 to 908; these read HKCP…ASQH, YKCV…IDTH, and FKCP…KDTH. The disordered stretch occupies residues 907–953; sequence THRETSNHDGTSTQNSLVKMESSDGEEWGRDEEEDKGKVSDANSAVP. Residues 914–923 are compositionally biased toward polar residues; the sequence is HDGTSTQNSL. Positions 929-940 are enriched in acidic residues; that stretch reads SDGEEWGRDEEE. 2 C2H2-type zinc fingers span residues 958 to 981 and 988 to 1011; these read WSCS…TEQH and FPCT…RVKH. Residues 1018–1044 form a C2H2-type 8; degenerate zinc finger; that stretch reads FYCQLCTGEKRSFSSKLILEKHIQAQH. Positions 1045-1093 are disordered; it reads AGERGTATQSQAVPQFTDGADSSSEHDAGVLGGSSVEPESRLAESTLTR. C2H2-type zinc fingers lie at residues 1137 to 1160 and 1210 to 1232; these read AQCQ…FISH and HICK…FRTH.

This sequence belongs to the krueppel C2H2-type zinc-finger protein family. As to expression, widely expressed with highest levels in kidney, spleen and ovary.

Its subcellular location is the nucleus. May be involved in transcriptional regulation. This chain is Zinc finger protein 687a (znf687a), found in Danio rerio (Zebrafish).